An 824-amino-acid chain; its full sequence is Dapper 1-B (824 aa).

3 disordered regions span residues 1–33, 131–150, and 515–534; these read MKPIPAAPEPLGQHQDSPRRKDKGEAESERQRT, EEHLETDSRPSSGFYELSDG, and HASSSFDERPPLDFKSEGSS. The tract at residues 2–343 is interaction with tcf7l1-A; it reads KPIPAAPEPL…PVRTNKPRTS (342 aa). The span at 16 to 33 shows a compositional bias: basic and acidic residues; it reads DSPRRKDKGEAESERQRT. Residues 84 to 139 adopt a coiled-coil conformation; it reads EEKFLEDNILLLKKQLNCLRKRDAGLLSQLHELDKQINDLRIDVEKTEEHLETDSR. A compositionally biased stretch (basic and acidic residues) spans 520-530; sequence FDERPPLDFKS. Positions 821 to 824 match the PDZ-binding motif; that stretch reads MTTV.

The protein belongs to the dapper family. In terms of assembly, interacts with dbf4 and tcf7l1-A. Interacts with dvl2/dsh; the interaction is required for dact1-b phosphorylation by CaMK1D and seems to become disrupted by the phosphorylation. Post-translationally, phosphorylated by CaMK1D; the phosphorylation requires binding to dvl2/dsh. Expressed both in the dorsal lip in early gastrula and throughout the posterior presumptive ectoderm in early neurula. Expressed in the dorsal neural folds at the tailbud stage and highly expressed in the tadpole head, including the brain, retina and cartilaginous branchial arch derivatives.

Its subcellular location is the cytoplasm. The protein localises to the nucleus. Its function is as follows. Involved in regulation of intracellular signaling pathways during development. Specifically thought to play a role in canonical and/or non-canonical Wnt signaling pathways through interaction with DSH (Dishevelled) family proteins. Binds to dvl2 to regulate the degradation of beta-catenin (ctnnb1-A and possibly ctnnb1-B), thereby modulating the transcriptional activation of target genes of the Wnt signaling pathway. Seems to promote beta-catenin degradation if not phosphorylated and to block beta-catenin degradation if phosphorylated by CaMK1D. Involved in regulation of catenin delta/ctnnd1 protein level. May also bind to and directly stimulate the activity of tcf7l1-A. Also regulates the activation by dvl2 of jnk, a component of ctnnb1/beta-catenin-independent frizzled signaling. Required for notochord and head formation. The chain is Dapper 1-B (dact1-b) from Xenopus laevis (African clawed frog).